Here is a 141-residue protein sequence, read N- to C-terminus: Small ribosomal subunit protein bS16 (141 aa).

Positions 84 to 141 (TRKARSNPEKSKPKAKAQERLEAARMAEEEAAAAAKAAAEAPAEEAPAAEAPAEEAQA) are disordered. A compositionally biased stretch (basic and acidic residues) spans 89-111 (SNPEKSKPKAKAQERLEAARMAE). The span at 115 to 141 (AAAAKAAAEAPAEEAPAAEAPAEEAQA) shows a compositional bias: low complexity.

This sequence belongs to the bacterial ribosomal protein bS16 family.

In Parvibaculum lavamentivorans (strain DS-1 / DSM 13023 / NCIMB 13966), this protein is Small ribosomal subunit protein bS16.